Reading from the N-terminus, the 492-residue chain is Heat shock factor protein 4 (492 aa).

Residues 17 to 122 (VPAFLGKLWA…LLERVRRKVP (106 aa)) mediate DNA binding. Residues 129–203 (SRWRPEDLSR…GPLQTGPSST (75 aa)) are hydrophobic repeat HR-A/B. The interval 245–322 (LPETTLGLSP…ECDFCVTAPP (78 aa)) is interactions with DUSP26, MAPK1 and MAPK2. The interval 263–282 (SDIPEDSPSPEGHRLSPSGG) is disordered. Lysine 293 participates in a covalent cross-link: Glycyl lysine isopeptide (Lys-Gly) (interchain with G-Cter in SUMO). Serine 298 carries the post-translational modification Phosphoserine. Positions 337–378 (GSYSPEGPRSVQQPEPRGPREVPDRGTLGLDRGNRSPESLLP) are disordered. Positions 364–389 (LGLDRGNRSPESLLPPMLLRPAPETL) are hydrophobic repeat HR-C.

It belongs to the HSF family. Homotrimer. Exhibits constitutive DNA binding and forms trimers even in the absence of stress. Interacts with ALKBH4, DUSP26, MAPK1, MAPK2, MAPK8 and MAP kinase p38. Post-translationally, phosphorylated mainly on serine residues. Phosphorylation on Ser-298 promotes sumoylation on Lys-293. Isoform HSF4B is constitutively sumoylated. Sumoylation represses the transcriptional activity and is promoted by phosphorylation on Ser-298. HSFA is not sumoylated. Preferentially expressed in brain and lung. Also found in the eye. Slightly detected in liver and skeletal muscle. Isoform B is the major species in various tissues.

It is found in the nucleus. Its function is as follows. Heat-shock transcription factor that specifically binds heat shock promoter elements (HSE). Required for denucleation and organelle rupture and degradation that occur during eye lens terminal differentiation, when fiber cells that compose the lens degrade all membrane-bound organelles in order to provide lens with transparency to allow the passage of light. In this process, may regulate denucleation of lens fiber cells in part by activating DNASE2B transcription. May be involved in DNA repair through the transcriptional regulation of RAD51. May up-regulate p53/TP53 protein in eye lens fiber cells, possibly through protein stabilization. In the eye lens, controls the expression of alpha-crystallin B chain/CRYAB and consequently may be involved in the regulation of lysosomal acidification. Functionally, transcriptional repressor. Transcriptional activator. The sequence is that of Heat shock factor protein 4 (Hsf4) from Mus musculus (Mouse).